We begin with the raw amino-acid sequence, 208 residues long: MGVTVVSHPLVQHKLTIMRKKETSTASFQRLLKEISLLLCYEVTRNLELTTMSIETPLMPMEAPVLEGKKLVFASILRAGNGLLEGMLDLVPAARVAHIGLYRDHDTLQPIEYYFKAPEDIVNRLVIVVDPMLATANSAIAAIDKLKERGATNIRFLCLLAAPEGIERFTKAHPDVEVFTASIDERLDEKGYIVPGLGDAGDRMYGTK.

5-phospho-alpha-D-ribose 1-diphosphate-binding positions include Arg-78, Arg-103, and 130-138 (DPMLATANS). Uracil contacts are provided by residues Ile-193 and 198–200 (GDA). Asp-199 serves as a coordination point for 5-phospho-alpha-D-ribose 1-diphosphate.

This sequence belongs to the UPRTase family. It depends on Mg(2+) as a cofactor.

The catalysed reaction is UMP + diphosphate = 5-phospho-alpha-D-ribose 1-diphosphate + uracil. It functions in the pathway pyrimidine metabolism; UMP biosynthesis via salvage pathway; UMP from uracil: step 1/1. Its activity is regulated as follows. Allosterically activated by GTP. Catalyzes the conversion of uracil and 5-phospho-alpha-D-ribose 1-diphosphate (PRPP) to UMP and diphosphate. The sequence is that of Uracil phosphoribosyltransferase from Brucella canis (strain ATCC 23365 / NCTC 10854 / RM-666).